The primary structure comprises 841 residues: Translation initiation factor IF-2 (841 aa).

A disordered region spans residues 94–255; that stretch reads QRSPEEIEAE…RNAHGFQSPT (162 aa). The segment covering 96–135 has biased composition (basic and acidic residues); it reads SPEEIEAERKREMDERRAVENAARQKAEEEAKRRAEEDAR. Over residues 136-175 the composition is skewed to low complexity; the sequence is NQPAAGQPASAPAQPVAAAEPVREAPAAAAPAPASAAPSA. Basic and acidic residues-rich tracts occupy residues 176–217 and 225–234; these read DARK…EKAP and TTDEESDSFR. Over residues 235–248 the composition is skewed to basic residues; the sequence is RGGRGKGKLKKRNA. Positions 341–510 constitute a tr-type G domain; sequence SRAPVVTVMG…LLQAEVLELK (170 aa). The segment at 350–357 is G1; sequence GHVDHGKT. 350–357 serves as a coordination point for GTP; the sequence is GHVDHGKT. Residues 375-379 form a G2 region; the sequence is GITQH. The tract at residues 396 to 399 is G3; sequence DTPG. GTP-binding positions include 396 to 400 and 450 to 453; these read DTPGH and NKID. The segment at 450-453 is G4; it reads NKID. Residues 486–488 form a G5 region; it reads SAK.

It belongs to the TRAFAC class translation factor GTPase superfamily. Classic translation factor GTPase family. IF-2 subfamily.

It is found in the cytoplasm. Functionally, one of the essential components for the initiation of protein synthesis. Protects formylmethionyl-tRNA from spontaneous hydrolysis and promotes its binding to the 30S ribosomal subunits. Also involved in the hydrolysis of GTP during the formation of the 70S ribosomal complex. This is Translation initiation factor IF-2 from Pseudomonas syringae pv. tomato (strain ATCC BAA-871 / DC3000).